The sequence spans 1906 residues: Alpha-2-macroglobulin homolog (1906 aa).

An N-terminal signal peptide occupies residues 1 to 21 (MIIRVCIRCFIVLTLVLGIGG). Cys22 carries the N-palmitoyl cysteine lipid modification. A lipid anchor (S-diacylglycerol cysteine) is attached at Cys22.

The protein belongs to the protease inhibitor I39 (alpha-2-macroglobulin) family. Bacterial alpha-2-macroglobulin subfamily.

The protein resides in the cell membrane. The sequence is that of Alpha-2-macroglobulin homolog from Nostoc sp. (strain PCC 7120 / SAG 25.82 / UTEX 2576).